The chain runs to 226 residues: Probable GPI-anchored adhesin-like protein PGA28 (226 aa).

Residues 1 to 26 (MKFFAYFAVIALSSASLINLFKRATA) form the signal peptide. Residues 119 to 209 (DTEATTGSDT…SQQTSSHAGG (91 aa)) are disordered. Residues 131-148 (KAATGATTSAGTGVTKTS) show a composition bias toward low complexity. Polar residues predominate over residues 149–160 (ETGGVSSTANSE). The segment covering 161–208 (AKSGSVTTSKSGSTSISESKTTSGSSSSGKSSSSTSSASSQQTSSHAG) has biased composition (low complexity). S197 carries the GPI-anchor amidated serine lipid modification. Residues 198–226 (ASSQQTSSHAGGASGAFVSLLGLFAALLI) constitute a propeptide, removed in mature form.

Post-translationally, predicted to be a cleavage substrate for KEX2.

It localises to the cell membrane. Functionally, putative adhesin which is involved in cell adhesion and virulence. Plays a role in Candida-bacterial interactions and subsequent regulation of filamentation. The protein is Probable GPI-anchored adhesin-like protein PGA28 (PGA28) of Candida albicans (strain SC5314 / ATCC MYA-2876) (Yeast).